The following is a 209-amino-acid chain: Glutathione S-transferase F7 (209 aa).

Residues 2 to 83 form the GST N-terminal domain; it reads AGIKVFGHPA…YIAHFYSDKG (82 aa). Residues 12-13, 41-42, 54-55, and 67-68 contribute to the glutathione site; these read ST, HK, KV, and ES. The 120-residue stretch at 90–209 folds into the GST C-terminal domain; sequence GSKDIAGIAM…TSRPSAKKVL (120 aa).

It belongs to the GST superfamily. Phi family.

It localises to the cytoplasm. The protein localises to the cytosol. It carries out the reaction RX + glutathione = an S-substituted glutathione + a halide anion + H(+). Its function is as follows. May be involved in the conjugation of reduced glutathione to a wide number of exogenous and endogenous hydrophobic electrophiles and have a detoxification role against certain herbicides. In Arabidopsis thaliana (Mouse-ear cress), this protein is Glutathione S-transferase F7.